The following is a 176-amino-acid chain: 3-hydroxydecanoyl-[acyl-carrier-protein] dehydratase (176 aa).

The active site involves His-70.

The protein belongs to the thioester dehydratase family. FabA subfamily. As to quaternary structure, homodimer.

It localises to the cytoplasm. It catalyses the reaction a (3R)-hydroxyacyl-[ACP] = a (2E)-enoyl-[ACP] + H2O. It carries out the reaction (3R)-hydroxydecanoyl-[ACP] = (2E)-decenoyl-[ACP] + H2O. The enzyme catalyses (2E)-decenoyl-[ACP] = (3Z)-decenoyl-[ACP]. Its pathway is lipid metabolism; fatty acid biosynthesis. Necessary for the introduction of cis unsaturation into fatty acids. Catalyzes the dehydration of (3R)-3-hydroxydecanoyl-ACP to E-(2)-decenoyl-ACP and then its isomerization to Z-(3)-decenoyl-ACP. Can catalyze the dehydratase reaction for beta-hydroxyacyl-ACPs with saturated chain lengths up to 16:0, being most active on intermediate chain length. The chain is 3-hydroxydecanoyl-[acyl-carrier-protein] dehydratase from Alkalilimnicola ehrlichii (strain ATCC BAA-1101 / DSM 17681 / MLHE-1).